A 195-amino-acid polypeptide reads, in one-letter code: Kiwa protein KwaA (195 aa).

Transmembrane regions (helical) follow at residues Gly-10–Ile-30, Leu-46–Phe-66, and Ile-117–Tyr-137.

The protein localises to the cell inner membrane. Component of antiviral defense system Kiwa, composed of KwaA and KwaB. Expression of Kiwa in E.coli (strain MG1655) confers resistance to phages lambda and SECphi18. The protein is Kiwa protein KwaA of Escherichia coli O55:H7 (strain RM12579 / EPEC).